Here is a 148-residue protein sequence, read N- to C-terminus: Protein-arginine-phosphatase (148 aa).

The active-site Nucleophile is the Cys-9. Thr-10–Arg-15 is a binding site for substrate. Arg-15 is a catalytic residue. The active-site Proton donor is the Asp-117.

The protein belongs to the low molecular weight phosphotyrosine protein phosphatase family. Is present in solution as a mixture of monomers, dimers and higher order oligomers (trimers and tetramers).

The enzyme catalyses N(omega)-phospho-L-arginyl-[protein] + H2O = L-arginyl-[protein] + phosphate. With respect to regulation, irreversibly inhibited by the synthetic inhibitor cyc-SeCN-amidine, which inactivates the enzyme by inducing disulfide bond formation between the two active site cysteine residues Cys-9 and Cys-14. In terms of biological role, catalyzes the specific dephosphorylation of phosphoarginine residues in proteins. Probably counteracts the protein arginine kinase McsB in vivo. Exhibits almost no activity against pTyr peptides. Protein arginine phosphorylation has a physiologically important role and is involved in the regulation of many critical cellular processes, such as protein homeostasis, motility, competence, and stringent and stress responses, by regulating gene expression and protein activity. This chain is Protein-arginine-phosphatase (ywle), found in Geobacillus stearothermophilus (Bacillus stearothermophilus).